A 300-amino-acid chain; its full sequence is UDP-N-acetylenolpyruvoylglucosamine reductase (300 aa).

In terms of domain architecture, FAD-binding PCMH-type spans 30-194 (KVGGAADFFV…VGATFRLDPA (165 aa)). Residue Arg-174 is part of the active site. Residue Ser-223 is the Proton donor of the active site. Residue Glu-293 is part of the active site.

It belongs to the MurB family. FAD is required as a cofactor.

It localises to the cytoplasm. The enzyme catalyses UDP-N-acetyl-alpha-D-muramate + NADP(+) = UDP-N-acetyl-3-O-(1-carboxyvinyl)-alpha-D-glucosamine + NADPH + H(+). The protein operates within cell wall biogenesis; peptidoglycan biosynthesis. Cell wall formation. The chain is UDP-N-acetylenolpyruvoylglucosamine reductase from Geobacter metallireducens (strain ATCC 53774 / DSM 7210 / GS-15).